Consider the following 179-residue polypeptide: Replication restart protein DnaT (179 aa).

Residues 151 to 179 (SRASNGGQPKRDVNSVSEPDSHIPRGFRG) form a disordered region. Residues 159-173 (PKRDVNSVSEPDSHI) are compositionally biased toward basic and acidic residues.

The protein belongs to the DnaT family. In terms of assembly, homooligomerizes. Interacts with PriB. Component of the replication restart primosome. Primosome assembly occurs via a 'hand-off' mechanism. PriA binds to replication forks, subsequently PriB then DnaT bind; DnaT then displaces ssDNA to generate the helicase loading substrate.

Functionally, involved in the restart of stalled replication forks, which reloads the replicative helicase on sites other than the origin of replication. Can function in multiple replication restart pathways. Displaces ssDNA from a PriB-ssDNA complex. Probably forms a spiral filament on ssDNA. In Klebsiella pneumoniae (strain 342), this protein is Replication restart protein DnaT.